We begin with the raw amino-acid sequence, 222 residues long: MGLFGKTQEKPPKELVNEWSLKIRKEMRVVDRQIRDIQREEEKVKRSVKDAAKKGQKDVCIVLAKEMIRSRKAVSKLYASKAHMNSVLMGMKNQLAVLRVAGSLQKSTEVMKAMQSLVKIPEIQATMRELSKEMMKAGIIEEMLEDTFESMDDQEEMEEEAEMEIDRILFEITAGALGKAPSKVTDALPEPEPPGAMAASEDEEEEEEALEAMQSRLATLRS.

Residue G2 is the site of N-myristoyl glycine attachment. The intramolecular interaction with C-terminus stretch occupies residues 2–113 (GLFGKTQEKP…LQKSTEVMKA (112 aa)). Residues 22-54 (KIRKEMRVVDRQIRDIQREEEKVKRSVKDAAKK) are a coiled coil. 2 important for autoinhibitory function regions span residues 59–64 (VCIVLA) and 168–169 (IL). Residues 141-222 (EEMLEDTFES…MQSRLATLRS (82 aa)) are a coiled coil. The segment at 151–220 (MDDQEEMEEE…EAMQSRLATL (70 aa)) is intramolecular interaction with N-terminus. An interaction with VPS4A region spans residues 151 to 222 (MDDQEEMEEE…MQSRLATLRS (72 aa)). A Glycyl lysine isopeptide (Lys-Gly) (interchain with G-Cter in ubiquitin) cross-link involves residue K179. The tract at residues 180 to 222 (APSKVTDALPEPEPPGAMAASEDEEEEEEALEAMQSRLATLRS) is disordered. Phosphoserine is present on S200. Residues 200–210 (SEDEEEEEEAL) show a composition bias toward acidic residues. The MIT-interacting motif signature appears at 201–211 (EDEEEEEEALE). 2 interaction with STAMBP regions span residues 203–207 (EEEEE) and 221–222 (RS).

This sequence belongs to the SNF7 family. Probable core component of the endosomal sorting required for transport complex III (ESCRT-III). ESCRT-III components are thought to multimerize to form a flat lattice on the perimeter membrane of the endosome. Several assembly forms of ESCRT-III may exist that interact and act sequentially. Forms a metastable monomer in solution; its core structure (without part of the putative autoinhibitory C-terminal acidic region) oligomerizes into a flat lattice via two different dimerization interfaces. In vitro, heteromerizes with CHMP2A (but not CHMP4) to form helical tubular structures that expose membrane-interacting sites on the outside whereas VPS4B can associate on the inside of the tubule. May interact with IGFBP7; the relevance of such interaction however remains unclear. Interacts with CHMP2A. Interacts with CHMP4A; the interaction requires the release of CHMP4A autoinhibition. Interacts with VPS4A. Interacts with STAMBP; the interaction appears to relieve the autoinhibition of CHMP3. Interacts with VTA1. Widely expressed. Expressed in heart, brain, placenta, lung, liver, skeletal muscle, kidney and pancreas.

The protein resides in the cytoplasm. Its subcellular location is the cytosol. It is found in the membrane. It localises to the endosome. The protein localises to the late endosome membrane. In terms of biological role, probable core component of the endosomal sorting required for transport complex III (ESCRT-III) which is involved in multivesicular bodies (MVBs) formation and sorting of endosomal cargo proteins into MVBs. MVBs contain intraluminal vesicles (ILVs) that are generated by invagination and scission from the limiting membrane of the endosome and mostly are delivered to lysosomes enabling degradation of membrane proteins, such as stimulated growth factor receptors, lysosomal enzymes and lipids. The MVB pathway appears to require the sequential function of ESCRT-O, -I,-II and -III complexes. ESCRT-III proteins mostly dissociate from the invaginating membrane before the ILV is released. The ESCRT machinery also functions in topologically equivalent membrane fission events, such as the terminal stages of cytokinesis and the budding of enveloped viruses (HIV-1 and other lentiviruses). ESCRT-III proteins are believed to mediate the necessary vesicle extrusion and/or membrane fission activities, possibly in conjunction with the AAA ATPase VPS4. Selectively binds to phosphatidylinositol 3,5-bisphosphate PtdIns(3,5)P2 and PtdIns(3,4)P2 in preference to other phosphoinositides tested. Involved in late stages of cytokinesis. Plays a role in endosomal sorting/trafficking of EGF receptor. Isoform 2 prevents stress-mediated cell death and accumulation of reactive oxygen species when expressed in yeast cells. This is Charged multivesicular body protein 3 (CHMP3) from Homo sapiens (Human).